The chain runs to 111 residues: Thiosulfate sulfurtransferase GlpE (111 aa).

The Rhodanese domain maps to 16-104 (QTENAVLLDV…WQRAGLPMET (89 aa)). Cys-64 acts as the Cysteine persulfide intermediate in catalysis.

Belongs to the GlpE family.

The protein resides in the cytoplasm. The enzyme catalyses thiosulfate + hydrogen cyanide = thiocyanate + sulfite + 2 H(+). It carries out the reaction thiosulfate + [thioredoxin]-dithiol = [thioredoxin]-disulfide + hydrogen sulfide + sulfite + 2 H(+). Its function is as follows. Transferase that catalyzes the transfer of sulfur from thiosulfate to thiophilic acceptors such as cyanide or dithiols. May function in a CysM-independent thiosulfate assimilation pathway by catalyzing the conversion of thiosulfate to sulfite, which can then be used for L-cysteine biosynthesis. This Actinobacillus succinogenes (strain ATCC 55618 / DSM 22257 / CCUG 43843 / 130Z) protein is Thiosulfate sulfurtransferase GlpE.